The chain runs to 260 residues: Translation initiation factor 2 subunit alpha (260 aa).

One can recognise an S1 motif domain in the interval 12-83 (GDLIVGTVHK…KKGHVDASLK (72 aa)).

Belongs to the eIF-2-alpha family. As to quaternary structure, heterotrimer composed of an alpha, a beta and a gamma chain.

In terms of biological role, eIF-2 functions in the early steps of protein synthesis by forming a ternary complex with GTP and initiator tRNA. The sequence is that of Translation initiation factor 2 subunit alpha from Methanosphaera stadtmanae (strain ATCC 43021 / DSM 3091 / JCM 11832 / MCB-3).